The following is a 412-amino-acid chain: Tryptophan synthase beta chain 1 (412 aa).

K103 carries the N6-(pyridoxal phosphate)lysine modification.

The protein belongs to the TrpB family. Tetramer of two alpha and two beta chains. The cofactor is pyridoxal 5'-phosphate.

The catalysed reaction is (1S,2R)-1-C-(indol-3-yl)glycerol 3-phosphate + L-serine = D-glyceraldehyde 3-phosphate + L-tryptophan + H2O. It functions in the pathway amino-acid biosynthesis; L-tryptophan biosynthesis; L-tryptophan from chorismate: step 5/5. In terms of biological role, the beta subunit is responsible for the synthesis of L-tryptophan from indole and L-serine. The protein is Tryptophan synthase beta chain 1 (trpB1) of Chlamydia caviae (strain ATCC VR-813 / DSM 19441 / 03DC25 / GPIC) (Chlamydophila caviae).